A 164-amino-acid polypeptide reads, in one-letter code: R-phycoerythrin alpha chain (164 aa).

(2R,3E)-phycoerythrobilin-binding residues include N47, K81, C82, R84, H88, R137, C139, and R142.

Belongs to the phycobiliprotein family. As to quaternary structure, heterododecamer of 6 alpha and 6 beta chains. The basic functional unit of phycobiliproteins is a ring-shaped hexamer formed from two back-to-back trimers contacting via the alpha chain subunits. The trimers are composed of alpha/beta subunit heterodimers arranged around a three-fold axis of symmetry. The phycoerythrins also contain a gamma subunit which is located in the center of the hexamer. In terms of processing, contains two covalently linked phycoerythrobilin chromophores.

The protein localises to the plastid. The protein resides in the chloroplast thylakoid membrane. Its function is as follows. Light-harvesting photosynthetic tetrapyrrole chromophore-protein from the phycobiliprotein complex. In Griffithsia monilis (Red alga), this protein is R-phycoerythrin alpha chain (cpeA).